A 445-amino-acid chain; its full sequence is Phosphoglucosamine mutase (445 aa).

Residue serine 99 is the Phosphoserine intermediate of the active site. The Mg(2+) site is built by serine 99, aspartate 242, aspartate 244, and aspartate 246. Phosphoserine is present on serine 99.

It belongs to the phosphohexose mutase family. Mg(2+) serves as cofactor. Post-translationally, activated by phosphorylation.

It catalyses the reaction alpha-D-glucosamine 1-phosphate = D-glucosamine 6-phosphate. Catalyzes the conversion of glucosamine-6-phosphate to glucosamine-1-phosphate. This is Phosphoglucosamine mutase from Campylobacter jejuni subsp. jejuni serotype O:23/36 (strain 81-176).